The primary structure comprises 438 residues: Aspartyl protease 25 (438 aa).

A signal peptide spans 1–23; the sequence is MAATTTIPLLLLLLAATVAAAAA. A Peptidase A1 domain is found at 79–433; that stretch reads YVVRAGLGSP…DVANSRVGFA (355 aa). The active site involves aspartate 97. Cysteines 107 and 113 form a disulfide. Asparagine 123, asparagine 193, and asparagine 282 each carry an N-linked (GlcNAc...) asparagine glycan. The active site involves aspartate 313. Cysteine 352 and cysteine 394 form a disulfide bridge.

The protein belongs to the peptidase A1 family.

Anther-specific aspartic protease involved in tapetal programmed cell death (PCD). Directly regulated by the transcription factor EAT1/DTD in anthers during tapetum PCD and degeneration. The chain is Aspartyl protease 25 from Oryza sativa subsp. japonica (Rice).